A 430-amino-acid chain; its full sequence is Trigger factor (430 aa).

Residues 157–242 (GDLVALETWS…AVEVSEPVLP (86 aa)) enclose the PPIase FKBP-type domain.

It belongs to the FKBP-type PPIase family. Tig subfamily.

The protein localises to the cytoplasm. It carries out the reaction [protein]-peptidylproline (omega=180) = [protein]-peptidylproline (omega=0). Its function is as follows. Involved in protein export. Acts as a chaperone by maintaining the newly synthesized protein in an open conformation. Functions as a peptidyl-prolyl cis-trans isomerase. The sequence is that of Trigger factor from Xanthomonas campestris pv. campestris (strain ATCC 33913 / DSM 3586 / NCPPB 528 / LMG 568 / P 25).